Reading from the N-terminus, the 386-residue chain is 11-beta-hydroxysteroid dehydrogenase type 2 (386 aa).

Thr-82–Ala-111 is a binding site for NAD(+). Residue Ser-219 participates in substrate binding. Tyr-232 serves as the catalytic Proton acceptor.

It belongs to the short-chain dehydrogenases/reductases (SDR) family. Interacts with ligand-free cytoplasmic NR3C2. In terms of tissue distribution, highly expressed in kidney. Also found in colon and small intestine. Not expressed in the adrenal gland. Expressed in uterus.

It localises to the microsome. Its subcellular location is the endoplasmic reticulum. It catalyses the reaction an 11beta-hydroxysteroid + NAD(+) = an 11-oxosteroid + NADH + H(+). The catalysed reaction is corticosterone + NAD(+) = 11-dehydrocorticosterone + NADH + H(+). The enzyme catalyses 11beta,17beta-dihydroxyandrost-4-ene-3-one + NAD(+) = 17beta-hydroxyandrost-4-ene-3,11-dione + NADH + H(+). It carries out the reaction 11beta-hydroxyandrost-4-ene-3,17-dione + NAD(+) = androst-4-ene-3,11,17-trione + NADH + H(+). The protein operates within steroid metabolism. Its activity is regulated as follows. Inhibited by glycyrrhetinic acid. Induced by progesterone, through the Ihh signaling pathway. Functionally, catalyzes the conversion of biologically active 11beta-hydroxyglucocorticoids (11beta-hydroxysteroid) such as corticosterone, to inactive 11-ketoglucocorticoids (11-oxosteroid) such as 11-dehydrocorticosterone, in the presence of NAD(+). Functions as a dehydrogenase (oxidase), thereby decreasing the concentration of active glucocorticoids, thus protecting the nonselective mineralocorticoid receptor from occupation by glucocorticoids. Plays an important role in maintaining glucocorticoids balance during preimplantation and protects the fetus from excessive maternal corticosterone exposure. Catalyzes the oxidation of 11beta-hydroxytestosterone (11beta,17beta-dihydroxyandrost-4-ene-3-one) to 11-ketotestosterone (17beta-hydroxyandrost-4-ene-3,11-dione), a major bioactive androgen. Catalyzes the conversion of 11beta-hydroxyandrostenedione (11beta-hydroxyandrost-4-ene-3,17-dione) to 11-ketoandrostenedione (androst-4-ene-3,11,17-trione), which can be further metabolized to 11-ketotestosterone. Converts 7-beta-25-dihydroxycholesterol to 7-oxo-25-hydroxycholesterol in vitro. 7-beta-25-dihydroxycholesterol (not 7-oxo-25-hydroxycholesterol) acts as a ligand for the G-protein-coupled receptor (GPCR) Epstein-Barr virus-induced gene 2 (EBI2) and may thereby regulate immune cell migration. This chain is 11-beta-hydroxysteroid dehydrogenase type 2 (Hsd11b2), found in Mus musculus (Mouse).